The sequence spans 339 residues: Beta-ketoacyl-[acyl-carrier-protein] synthase III (339 aa).

Catalysis depends on residues Cys121 and His257. Positions 258-262 are ACP-binding; that stretch reads QANLR. Asn288 is a catalytic residue.

It belongs to the thiolase-like superfamily. FabH family. Homodimer.

It is found in the cytoplasm. It carries out the reaction malonyl-[ACP] + propanoyl-CoA + H(+) = 3-oxopentanoyl-[ACP] + CO2 + CoA. It catalyses the reaction 2-methylpropanoyl-CoA + malonyl-[ACP] + H(+) = 4-methyl-3-oxopentanoyl-[ACP] + CO2 + CoA. The enzyme catalyses malonyl-[ACP] + acetyl-CoA + H(+) = 3-oxobutanoyl-[ACP] + CO2 + CoA. The catalysed reaction is butanoyl-CoA + malonyl-[ACP] + H(+) = 3-oxohexanoyl-[ACP] + CO2 + CoA. It functions in the pathway lipid metabolism; fatty acid biosynthesis. Its function is as follows. Catalyzes the condensation reaction of fatty acid synthesis by the addition to an acyl acceptor of two carbons from malonyl-ACP. Catalyzes the first condensation reaction which initiates fatty acid synthesis and may therefore play a role in governing the total rate of fatty acid production. Possesses both acetoacetyl-ACP synthase and acetyl transacylase activities. Propionyl-CoA and isobutyryl-CoA were the two most preferred substrates, although acetyl-CoA and butyryl-CoA could also be accepted and elongated. Involved in the biosynthesis of R1128 polyketide. This is Beta-ketoacyl-[acyl-carrier-protein] synthase III from Streptomyces lividans.